The sequence spans 135 residues: Probable disulfide formation protein (135 aa).

Residues 7-26 (SYCLYFAWLVSCIGTLMSVY) traverse the membrane as a helical segment. Cys-36 and Cys-39 are joined by a disulfide. Helical transmembrane passes span 41 to 60 (YQRI…AYLD) and 67 to 84 (YALP…YQVC). A disulfide bond links Cys-96 and Cys-101. A helical membrane pass occupies residues 109-131 (GFITMPMASALAFFAIANLLIFA).

Belongs to the DsbB family. BdbC subfamily.

The protein localises to the cell inner membrane. Functionally, required for disulfide bond formation in some proteins. The chain is Probable disulfide formation protein from Chlamydia muridarum (strain MoPn / Nigg).